Consider the following 128-residue polypeptide: uncharacterized protein (128 aa).

This is an uncharacterized protein from Bacillus subtilis (strain 168).